A 416-amino-acid polypeptide reads, in one-letter code: Multifunctional CCA protein (416 aa).

Positions 8 and 11 each coordinate ATP. Residues Gly-8 and Arg-11 each contribute to the CTP site. The Mg(2+) site is built by Asp-21 and Asp-23. ATP-binding residues include Arg-91, Arg-138, and Arg-141. Residues Arg-91, Arg-138, and Arg-141 each coordinate CTP. The HD domain maps to Thr-229 to Phe-331.

This sequence belongs to the tRNA nucleotidyltransferase/poly(A) polymerase family. Bacterial CCA-adding enzyme type 1 subfamily. In terms of assembly, monomer. Can also form homodimers and oligomers. The cofactor is Mg(2+). Ni(2+) serves as cofactor.

The enzyme catalyses a tRNA precursor + 2 CTP + ATP = a tRNA with a 3' CCA end + 3 diphosphate. The catalysed reaction is a tRNA with a 3' CCA end + 2 CTP + ATP = a tRNA with a 3' CCACCA end + 3 diphosphate. Catalyzes the addition and repair of the essential 3'-terminal CCA sequence in tRNAs without using a nucleic acid template. Adds these three nucleotides in the order of C, C, and A to the tRNA nucleotide-73, using CTP and ATP as substrates and producing inorganic pyrophosphate. tRNA 3'-terminal CCA addition is required both for tRNA processing and repair. Also involved in tRNA surveillance by mediating tandem CCA addition to generate a CCACCA at the 3' terminus of unstable tRNAs. While stable tRNAs receive only 3'-terminal CCA, unstable tRNAs are marked with CCACCA and rapidly degraded. The chain is Multifunctional CCA protein from Xylella fastidiosa (strain M12).